Reading from the N-terminus, the 583-residue chain is Phytoene desaturase (583 aa).

The first 20 residues, 1 to 20, serve as a signal peptide directing secretion; sequence MAPPKHVIIIGAGAGGTATA. Residues 531–551 form a helical membrane-spanning segment; sequence IIWFLLIALFAATLVLFIAFP.

The protein belongs to the carotenoid/retinoid oxidoreductase family. Requires NAD(+) as cofactor.

The protein resides in the membrane. It carries out the reaction 15-cis-phytoene + 5 A = all-trans-3,4-didehydrolycopene + 5 AH2. Its pathway is carotenoid biosynthesis; lycopene biosynthesis. In terms of biological role, phytoene desaturase involved in the carotenoid biosynthesis pathway. Converts phytoene into 3,4-didehydrolycopene via the intermediary of phytofluene, zeta-carotene, neurosporene and lycopene, by introducing up to five double bonds into phytoene. The protein is Phytoene desaturase (carB) of Phycomyces blakesleeanus (strain ATCC 8743b / DSM 1359 / FGSC 10004 / NBRC 33097 / NRRL 1555).